Consider the following 232-residue polypeptide: Membrane steroid-binding protein 1 (232 aa).

The chain crosses the membrane as a helical span at residues 25–45 (AAFFTAVAAAAALYHVVSGIF). Disordered regions lie at residues 48 to 77 (PPPP…VSEE) and 172 to 232 (TVPV…AKES). The 100-residue stretch at 71 to 170 (LGEVSEEELR…GKYVKVGTVK (100 aa)) folds into the Cytochrome b5 heme-binding domain. The steroid-binding stretch occupies residues 73-170 (EVSEEELRQY…GKYVKVGTVK (98 aa)). The span at 179–193 (APSTSPETTETAAAA) shows a compositional bias: low complexity. Residues 194–219 (EPEKAPATEEKPREVSSEEVKEKEDA) show a composition bias toward basic and acidic residues.

It belongs to the cytochrome b5 family. MAPR subfamily. Interacts with SERL2. Expressed in leaf sheaths, leaf blades and panicles.

The protein resides in the cell membrane. In terms of biological role, binds multiple steroid compounds. May act as a coreceptor with SERL2 and enhance its endocytosis. The protein is Membrane steroid-binding protein 1 of Oryza sativa subsp. japonica (Rice).